The following is a 123-amino-acid chain: Small ribosomal subunit protein uS12 (123 aa).

Position 89 is a 3-methylthioaspartic acid (Asp89).

The protein belongs to the universal ribosomal protein uS12 family. As to quaternary structure, part of the 30S ribosomal subunit. Contacts proteins S8 and S17. May interact with IF1 in the 30S initiation complex.

Functionally, with S4 and S5 plays an important role in translational accuracy. Its function is as follows. Interacts with and stabilizes bases of the 16S rRNA that are involved in tRNA selection in the A site and with the mRNA backbone. Located at the interface of the 30S and 50S subunits, it traverses the body of the 30S subunit contacting proteins on the other side and probably holding the rRNA structure together. The combined cluster of proteins S8, S12 and S17 appears to hold together the shoulder and platform of the 30S subunit. The sequence is that of Small ribosomal subunit protein uS12 from Syntrophotalea carbinolica (strain DSM 2380 / NBRC 103641 / GraBd1) (Pelobacter carbinolicus).